Consider the following 381-residue polypeptide: Chymosin (381 aa).

The N-terminal stretch at 1–16 (MRGFVVLLAVFALSQA) is a signal peptide. The propeptide at 17 to 58 (SGIVRIPLHKGKSLRRALKERGLLEDFLKNHQHAVSRKHSNS) is activation peptide. In terms of domain architecture, Peptidase A1 spans 74–378 (YFGKIYIGTP…DRASNLVGLA (305 aa)). Asp-92 is a catalytic residue. Repeat 1 spans residues 92 to 102 (DTGSSDLWVPS). 2 cysteine pairs are disulfide-bonded: Cys-105-Cys-110 and Cys-265-Cys-269. The active site involves Asp-274. Repeat unit 2 spans residues 274-284 (DTGTSMLVGPG). A disulfide bond links Cys-308 and Cys-341.

Belongs to the peptidase A1 family. In terms of assembly, monomer.

It carries out the reaction Broad specificity similar to that of pepsin A. Clots milk by cleavage of a single 104-Ser-Phe-|-Met-Ala-107 bond in kappa-chain of casein.. Its activity is regulated as follows. Inhibited by pepstatin. Its function is as follows. Hydrolyzes a variety of proteins. The polypeptide is Chymosin (CYM) (Callithrix jacchus (White-tufted-ear marmoset)).